The sequence spans 891 residues: DNA mismatch repair protein MutS (891 aa).

Residue 643 to 650 participates in ATP binding; that stretch reads GPNMGGKS.

It belongs to the DNA mismatch repair MutS family.

In terms of biological role, this protein is involved in the repair of mismatches in DNA. It is possible that it carries out the mismatch recognition step. This protein has a weak ATPase activity. The polypeptide is DNA mismatch repair protein MutS (Xanthomonas campestris pv. campestris (strain ATCC 33913 / DSM 3586 / NCPPB 528 / LMG 568 / P 25)).